The following is a 115-amino-acid chain: Meromycolate extension acyl carrier protein (115 aa).

Residues 3 to 81 form the Carrier domain; sequence VTQEEIIAGI…DVVAYIQKLE (79 aa). The residue at position 41 (S41) is an O-(pantetheine 4'-phosphoryl)serine.

This sequence belongs to the acyl carrier protein (ACP) family. Post-translationally, 4'-phosphopantetheine is transferred from CoA to a specific serine of apo-AcpM.

It is found in the cytoplasm. Acyl carrier protein involved in meromycolate extension. In Mycobacterium bovis (strain ATCC BAA-935 / AF2122/97), this protein is Meromycolate extension acyl carrier protein (acpM).